A 430-amino-acid polypeptide reads, in one-letter code: Adenylosuccinate synthetase (430 aa).

GTP-binding positions include Gly-12–Lys-18 and Gly-40–Thr-42. The active-site Proton acceptor is Asp-13. Positions 13 and 40 each coordinate Mg(2+). Residues Asp-13 to Lys-16, Asn-38 to His-41, Thr-130, Arg-144, Gln-224, Thr-239, and Arg-303 contribute to the IMP site. The Proton donor role is filled by His-41. A substrate-binding site is contributed by Ala-299 to Arg-305. GTP is bound by residues Arg-305, Lys-331 to Asp-333, and Ser-413 to Gly-415.

This sequence belongs to the adenylosuccinate synthetase family. Homodimer. It depends on Mg(2+) as a cofactor.

The protein localises to the cytoplasm. It catalyses the reaction IMP + L-aspartate + GTP = N(6)-(1,2-dicarboxyethyl)-AMP + GDP + phosphate + 2 H(+). It functions in the pathway purine metabolism; AMP biosynthesis via de novo pathway; AMP from IMP: step 1/2. In terms of biological role, plays an important role in the de novo pathway of purine nucleotide biosynthesis. Catalyzes the first committed step in the biosynthesis of AMP from IMP. The chain is Adenylosuccinate synthetase from Trichlorobacter lovleyi (strain ATCC BAA-1151 / DSM 17278 / SZ) (Geobacter lovleyi).